Consider the following 407-residue polypeptide: E3 ubiquitin-protein ligase IE2 (407 aa).

Residues 1-10 (MSRQINAATP) are compositionally biased toward polar residues. The segment at 1 to 69 (MSRQINAATP…RVSEENVQII (69 aa)) is disordered. Over residues 13 to 25 (SRHHRLSLSRRRI) the composition is skewed to basic residues. Over residues 31–47 (SEAQPSSSSRSQTSSSS) the composition is skewed to low complexity. Positions 127 to 158 (QQYQNNIASETAAQRALQRALDLEAQLMNEIA) form a coiled coil. The segment at 179–200 (QSPDLFASPQSSEQQQQSEPEE) is disordered. Positions 186–196 (SPQSSEQQQQS) are enriched in low complexity. The RING-type; degenerate zinc-finger motif lies at 206-254 (CNICFTTFKDTKNVNSSFVTTTHCNHAVCFKCYVKIIMANSVYKCFCSA). A coiled-coil region spans residues 336 to 393 (LKHKHAVAELDLQKANYDLQESTKKSEELQSTVNNLQEQLNKQVVESQAKFLEFERNN).

The protein belongs to the alphabaculovirus IE2 protein family. As to quaternary structure, homooligomer. Auto-ubiquitinated.

The protein resides in the host nucleus. It carries out the reaction S-ubiquitinyl-[E2 ubiquitin-conjugating enzyme]-L-cysteine + [acceptor protein]-L-lysine = [E2 ubiquitin-conjugating enzyme]-L-cysteine + N(6)-ubiquitinyl-[acceptor protein]-L-lysine.. In terms of biological role, RING-finger E3 ubiquitin ligase that plays an important regulatory role during the initial stages of infection. Migrates to specific nuclear foci early in infection supposely to prepare the sites for viral replication by targeting and ubiquitinating host proteins. This is E3 ubiquitin-protein ligase IE2 (IE2) from Rachiplusia ou multiple nucleopolyhedrovirus (strain R1) (RoMNPV).